The sequence spans 306 residues: tRNA-cytidine(32) 2-sulfurtransferase (306 aa).

The segment at 1–25 (MSAVISLPDPQPRAARDPRVAEREQ) is disordered. Basic and acidic residues predominate over residues 14–25 (AARDPRVAEREQ). The short motif at 57–62 (SGGKDS) is the PP-loop motif element. [4Fe-4S] cluster contacts are provided by Cys-132, Cys-135, and Cys-223. Positions 286–306 (AHAWLAGSPADADADPETPTV) are disordered. Residues 297–306 (ADADPETPTV) show a composition bias toward acidic residues.

The protein belongs to the TtcA family. As to quaternary structure, homodimer. Mg(2+) is required as a cofactor. The cofactor is [4Fe-4S] cluster.

It is found in the cytoplasm. It catalyses the reaction cytidine(32) in tRNA + S-sulfanyl-L-cysteinyl-[cysteine desulfurase] + AH2 + ATP = 2-thiocytidine(32) in tRNA + L-cysteinyl-[cysteine desulfurase] + A + AMP + diphosphate + H(+). It functions in the pathway tRNA modification. Functionally, catalyzes the ATP-dependent 2-thiolation of cytidine in position 32 of tRNA, to form 2-thiocytidine (s(2)C32). The sulfur atoms are provided by the cysteine/cysteine desulfurase (IscS) system. In Stenotrophomonas maltophilia (strain K279a), this protein is tRNA-cytidine(32) 2-sulfurtransferase.